Consider the following 123-residue polypeptide: Small ribosomal subunit protein uS12 (123 aa).

A disordered region spans residues 9-32 (ANPREVQKSRKKVPALQQSPQKRG). Residue D89 is modified to 3-methylthioaspartic acid.

It belongs to the universal ribosomal protein uS12 family. In terms of assembly, part of the 30S ribosomal subunit. Contacts proteins S8 and S17. May interact with IF1 in the 30S initiation complex.

In terms of biological role, with S4 and S5 plays an important role in translational accuracy. Functionally, interacts with and stabilizes bases of the 16S rRNA that are involved in tRNA selection in the A site and with the mRNA backbone. Located at the interface of the 30S and 50S subunits, it traverses the body of the 30S subunit contacting proteins on the other side and probably holding the rRNA structure together. The combined cluster of proteins S8, S12 and S17 appears to hold together the shoulder and platform of the 30S subunit. In Bradyrhizobium sp. (strain BTAi1 / ATCC BAA-1182), this protein is Small ribosomal subunit protein uS12.